We begin with the raw amino-acid sequence, 168 residues long: MCPSSFVLVIRLWFPPLTGAIVNGTTSKLTRTQRRIAIVEFIFATLFFLPKTADQIQAAFLDYDVPERPLNDWQKEIVKVFSERCVEFIELIENQQQRNQAEVQSKYNKVSGKKVDLLTKAVILCALSEQHAQATDKPLLISEALLIMDHYSQVPEKKQTHALLDKLL.

This is an uncharacterized protein from Mycoplasma pneumoniae (strain ATCC 29342 / M129 / Subtype 1) (Mycoplasmoides pneumoniae).